A 90-amino-acid chain; its full sequence is Probable two-component-system connector protein YmgA (90 aa).

Polar residues predominate over residues serine 63 to methionine 80. Positions serine 63–histidine 90 are disordered.

In terms of biological role, probably a connector protein for RcsB/C regulation of biofilm formation, providing additional signal input into the two-component signaling pathway. May serve to stimulate biofilm maturation, probably via the Rcs phosphorelay. Mild overexpression at 16 degrees Celsius increases the production of colanic acid, an exopolysaccharide and matrix component, and reduces adhesive curli fimbriae expression. Both of these effects require RcsB. The protein is Probable two-component-system connector protein YmgA (ymgA) of Escherichia coli (strain K12).